Here is a 433-residue protein sequence, read N- to C-terminus: 3-phosphoshikimate 1-carboxyvinyltransferase (433 aa).

Residues K22, S23, and R27 each coordinate 3-phosphoshikimate. K22 serves as a coordination point for phosphoenolpyruvate. The phosphoenolpyruvate site is built by G95 and R123. Positions 167, 169, 315, and 342 each coordinate 3-phosphoshikimate. Residue Q169 coordinates phosphoenolpyruvate. The active-site Proton acceptor is the D315. Phosphoenolpyruvate contacts are provided by R346 and R387.

The protein belongs to the EPSP synthase family. As to quaternary structure, monomer.

It localises to the cytoplasm. It carries out the reaction 3-phosphoshikimate + phosphoenolpyruvate = 5-O-(1-carboxyvinyl)-3-phosphoshikimate + phosphate. It functions in the pathway metabolic intermediate biosynthesis; chorismate biosynthesis; chorismate from D-erythrose 4-phosphate and phosphoenolpyruvate: step 6/7. Functionally, catalyzes the transfer of the enolpyruvyl moiety of phosphoenolpyruvate (PEP) to the 5-hydroxyl of shikimate-3-phosphate (S3P) to produce enolpyruvyl shikimate-3-phosphate and inorganic phosphate. The protein is 3-phosphoshikimate 1-carboxyvinyltransferase of Legionella pneumophila (strain Corby).